A 98-amino-acid chain; its full sequence is C-C motif chemokine 19 (98 aa).

A signal peptide spans 1–21; it reads MALLLALSLLVLWTSPAPTLS. Cystine bridges form between Cys-29/Cys-55 and Cys-30/Cys-71.

This sequence belongs to the intercrine beta (chemokine CC) family. Interacts with TNFAIP6 (via Link domain). Expressed at high levels in the lymph nodes, thymus and appendix. Intermediate levels seen in colon and trachea, while low levels found in spleen, small intestine, lung, kidney and stomach.

It localises to the secreted. May play a role not only in inflammatory and immunological responses but also in normal lymphocyte recirculation and homing. May play an important role in trafficking of T-cells in thymus, and T-cell and B-cell migration to secondary lymphoid organs. Binds to chemokine receptor CCR7. Recombinant CCL19 shows potent chemotactic activity for T-cells and B-cells but not for granulocytes and monocytes. Binds to atypical chemokine receptor ACKR4 and mediates the recruitment of beta-arrestin (ARRB1/2) to ACKR4. In Homo sapiens (Human), this protein is C-C motif chemokine 19 (CCL19).